We begin with the raw amino-acid sequence, 138 residues long: Phosphoribosyl-AMP cyclohydrolase (138 aa).

Position 84 (Asp-84) interacts with Mg(2+). Cys-85 is a binding site for Zn(2+). Mg(2+)-binding residues include Asp-86 and Asp-88. Cys-102 and Cys-109 together coordinate Zn(2+).

The protein belongs to the PRA-CH family. In terms of assembly, homodimer. Requires Mg(2+) as cofactor. Zn(2+) is required as a cofactor.

The protein resides in the cytoplasm. It carries out the reaction 1-(5-phospho-beta-D-ribosyl)-5'-AMP + H2O = 1-(5-phospho-beta-D-ribosyl)-5-[(5-phospho-beta-D-ribosylamino)methylideneamino]imidazole-4-carboxamide. It participates in amino-acid biosynthesis; L-histidine biosynthesis; L-histidine from 5-phospho-alpha-D-ribose 1-diphosphate: step 3/9. In terms of biological role, catalyzes the hydrolysis of the adenine ring of phosphoribosyl-AMP. This chain is Phosphoribosyl-AMP cyclohydrolase, found in Burkholderia ambifaria (strain ATCC BAA-244 / DSM 16087 / CCUG 44356 / LMG 19182 / AMMD) (Burkholderia cepacia (strain AMMD)).